The primary structure comprises 219 residues: Ribosomal RNA large subunit methyltransferase E (219 aa).

Glycine 60, tryptophan 62, aspartate 85, aspartate 101, and aspartate 126 together coordinate S-adenosyl-L-methionine. The Proton acceptor role is filled by lysine 166.

Belongs to the class I-like SAM-binding methyltransferase superfamily. RNA methyltransferase RlmE family.

It localises to the cytoplasm. The enzyme catalyses uridine(2552) in 23S rRNA + S-adenosyl-L-methionine = 2'-O-methyluridine(2552) in 23S rRNA + S-adenosyl-L-homocysteine + H(+). In terms of biological role, specifically methylates the uridine in position 2552 of 23S rRNA at the 2'-O position of the ribose in the fully assembled 50S ribosomal subunit. This Bordetella avium (strain 197N) protein is Ribosomal RNA large subunit methyltransferase E.